The sequence spans 339 residues: MWWLWASLCCLLALGDARSRPSFHPLSDELVNYVNKQNTTWQAGHNFYNVDVSYLKRLCGTFLGGPKPPQRVMFTEDLKLPESFDAREQWPQCPTIKEIRDQGSCGSCWAFGAVEAISDRICIHTNAHVSVEVSAEDLLTCCGIMCGDGCNGGYPAGAWNFWTRKGLVSGGLYDSHVGCRPYSIPPCEHHVNGSRPPCTGEGDTPKCSKICEPGYSPTYKQDKHYGYNSYSVSNSEKDIMAEIYKNGPVEGAFSVYSDFLLYKSGVYQHVTGEMMGGHAIRILGWGVENGTPYWLVANSWNTDWGDNGFFKILRGQDHCGIESEVVAGIPRTDQYWEKI.

The N-terminal stretch at 1-17 is a signal peptide; the sequence is MWWLWASLCCLLALGDA. A propeptide spans 18-79 (activation peptide); the sequence is RSRPSFHPLS…QRVMFTEDLK (62 aa). Cystine bridges form between C93–C122, C105–C150, C141–C207, C142–C146, C179–C211, and C187–C198. C108 is a catalytic residue. N192 carries an N-linked (GlcNAc...) asparagine glycan. The residue at position 220 (K220) is an N6-acetyllysine. Residues H278 and N298 contribute to the active site. Residues 334–339 constitute a propeptide that is removed on maturation; that stretch reads QYWEKI.

The protein belongs to the peptidase C1 family. In terms of assembly, dimer of a heavy chain and a light chain cross-linked by a disulfide bond. Interacts with SRPX2. Directly interacts with SHKBP1.

Its subcellular location is the lysosome. The protein resides in the melanosome. It is found in the secreted. The protein localises to the extracellular space. It localises to the apical cell membrane. It carries out the reaction Hydrolysis of proteins with broad specificity for peptide bonds. Preferentially cleaves -Arg-Arg-|-Xaa bonds in small molecule substrates (thus differing from cathepsin L). In addition to being an endopeptidase, shows peptidyl-dipeptidase activity, liberating C-terminal dipeptides.. Its function is as follows. Thiol protease which is believed to participate in intracellular degradation and turnover of proteins. Cleaves matrix extracellular phosphoglycoprotein MEPE. Involved in the solubilization of cross-linked TG/thyroglobulin in the thyroid follicle lumen. Has also been implicated in tumor invasion and metastasis. This is Cathepsin B (CTSB) from Macaca fascicularis (Crab-eating macaque).